A 1160-amino-acid chain; its full sequence is ATP-dependent RNA helicase dhx8 (1160 aa).

Disordered regions lie at residues 75–140 and 153–192; these read TTTT…SIPN and PIDDEKTKEELKRKQQDMDREFEREQREKRDRDREQQNKR. Composition is skewed to low complexity over residues 76 to 110 and 122 to 132; these read TTTTNNNNNNNNNNTNTAKTTTTTTTTTTTTNNNN and NSNSNNQKKNQ. Over residues 155–192 the composition is skewed to basic and acidic residues; it reads DDEKTKEELKRKQQDMDREFEREQREKRDRDREQQNKR. The 73-residue stretch at 202 to 274 folds into the S1 motif domain; the sequence is YKIYDGKVSS…ASSKISLSMK (73 aa). The segment covering 294-320 has biased composition (low complexity); that stretch reads ISTNSTNNRSNPFKPNNNNNNSSNNNN. 2 disordered regions span residues 294–334 and 409–438; these read ISTN…KNRK and KPNGSLQRAASTQTALSKERKEEKNQQRNE. Residues 412–424 are compositionally biased toward polar residues; that stretch reads GSLQRAASTQTAL. A compositionally biased stretch (basic and acidic residues) spans 425-438; sequence SKERKEEKNQQRNE. The 164-residue stretch at 518 to 681 folds into the Helicase ATP-binding domain; the sequence is LQAVSEHQLL…FMNAQLFIIP (164 aa). Residue 531–538 coordinates ATP; that stretch reads GETGSGKT. Residues 628–631 carry the DEAH box motif; the sequence is DEAH. In terms of domain architecture, Helicase C-terminal spans 699–879; the sequence is YLDASLITVM…NTVLTMKAMG (181 aa).

The protein belongs to the DEAD box helicase family. DEAH subfamily. DDX8/PRP22 sub-subfamily. In terms of assembly, identified in the spliceosome complex.

It is found in the nucleus. The catalysed reaction is ATP + H2O = ADP + phosphate + H(+). In terms of biological role, facilitates nuclear export of spliced mRNA by releasing the RNA from the spliceosome. In Dictyostelium discoideum (Social amoeba), this protein is ATP-dependent RNA helicase dhx8 (dhx8).